The primary structure comprises 1150 residues: Cohesin subunit SCC3 (1150 aa).

The span at 1 to 12 shows a compositional bias: basic residues; that stretch reads MTAVRRSTRIRT. Residues 1–122 are disordered; the sequence is MTAVRRSTRI…PAYHRSKKDQ (122 aa). Residue serine 28 is modified to Phosphoserine. Residues 32 to 43 show a composition bias toward basic and acidic residues; sequence VESDKITAKTQH. A compositionally biased stretch (acidic residues) spans 44-72; it reads EEEEEQDTGESEESSSEDDYEDQDDDDYV. Basic residues predominate over residues 77–87; that stretch reads AKRKSRKRKPK. Residues 305 to 349 adopt a coiled-coil conformation; sequence LTQQAVNLEKNYLAKLSKQLSLEEKKKRPNNKTLEKLESTIAETQ. The region spanning 367-457 is the SCD domain; sequence FVHRYKDVSD…ERFKTKILEV (91 aa). Serine 628 is modified (phosphoserine). A disordered region spans residues 1065–1150; sequence ENPEPNKKNI…IDNSDEITQD (86 aa). Positions 1083-1101 are enriched in basic and acidic residues; that stretch reads QREKAPLQPNSERETDHAN.

The protein belongs to the SCC3 family. Interacts directly with MCD1 in cohesin complex. Cohesin complexes are composed of the SMC1 and SMC3 heterodimer attached via their hinge domain, MCD1 which link them, and IRR1/SCC3, which interacts with MCD1. The cohesin complex also interacts with SCC2, which is required for its association with chromosomes. Interacts with LIN1. Acetylated by ECO1.

The protein localises to the nucleus. It is found in the chromosome. Its subcellular location is the centromere. Component of cohesin complex, a complex required for the cohesion of sister chromatids after DNA replication. The cohesin complex apparently forms a large proteinaceous ring within which sister chromatids can be trapped. At anaphase, the MCD1/SCC1 subunit of the complex is cleaved and dissociates from chromatin, allowing sister chromatids to segregate. The cohesin complex may also play a role in spindle pole assembly during mitosis. The chain is Cohesin subunit SCC3 (IRR1) from Saccharomyces cerevisiae (strain ATCC 204508 / S288c) (Baker's yeast).